Here is a 49-residue protein sequence, read N- to C-terminus: Small, acid-soluble spore protein K (49 aa).

The disordered stretch occupies residues 1–49; the sequence is MRNKSRGFPNMNNNKFEGEPRAKDDFASKRPDGSTNTHPQERMRASGKR. 2 stretches are compositionally biased toward basic and acidic residues: residues 16–32 and 39–49; these read FEGE…KRPD and PQERMRASGKR.

It belongs to the SspK family.

The protein localises to the spore core. The protein is Small, acid-soluble spore protein K of Bacillus licheniformis (strain ATCC 14580 / DSM 13 / JCM 2505 / CCUG 7422 / NBRC 12200 / NCIMB 9375 / NCTC 10341 / NRRL NRS-1264 / Gibson 46).